A 42-amino-acid polypeptide reads, in one-letter code: uncharacterized protein (42 aa).

Residues 1 to 42 are disordered; sequence MTTGKPQSFEKMRTPFPGRSKAKGPQSDIIPSAPPNTPVTEH. Residues 32–42 are compositionally biased toward pro residues; the sequence is SAPPNTPVTEH.

This is an uncharacterized protein from Schizosaccharomyces pombe (strain 972 / ATCC 24843) (Fission yeast).